The sequence spans 188 residues: Capsid protein (188 aa).

Belongs to the tymoviruses capsid protein family.

It is found in the virion. Its function is as follows. Self-assembles to form a T=3 icosahedral capsid composed of 180 copies of the capsid protein. The capsid encapsulates the single-stranded RNA genome. This chain is Capsid protein, found in Physalis heterophylla (PhMV).